Consider the following 1142-residue polypeptide: Error-prone DNA polymerase (1142 aa).

The disordered stretch occupies residues 291–361; it reads TSSPAQAARE…GTGAAAGTDR (71 aa). 2 stretches are compositionally biased toward low complexity: residues 311 to 320 and 327 to 344; these read LRASLPAERP and GPAASAPEGPASSEPGEP. The span at 345-355 shows a compositional bias: gly residues; it reads GLAGAGGGTGA.

This sequence belongs to the DNA polymerase type-C family. DnaE2 subfamily.

It is found in the cytoplasm. The enzyme catalyses DNA(n) + a 2'-deoxyribonucleoside 5'-triphosphate = DNA(n+1) + diphosphate. Its function is as follows. DNA polymerase involved in damage-induced mutagenesis and translesion synthesis (TLS). It is not the major replicative DNA polymerase. This chain is Error-prone DNA polymerase, found in Anaeromyxobacter dehalogenans (strain 2CP-1 / ATCC BAA-258).